The primary structure comprises 314 residues: Mitochondrial thiamine pyrophosphate carrier 1 (314 aa).

Transmembrane regions (helical) follow at residues 14-30 (VAAW…GLLA), 84-100 (LLYV…YSLF), 116-136 (LVVG…FDVL), 170-186 (GSIA…SIMF), 217-233 (SAGT…TFPL), and 285-302 (GILV…VSFW). Solcar repeat units lie at residues 14–103 (VAAW…FNRY), 110–195 (EARL…IRIY), and 210–310 (ELAT…AIHY).

This sequence belongs to the mitochondrial carrier (TC 2.A.29) family.

The protein resides in the mitochondrion inner membrane. Functionally, mitochondrial transporter that mediates uptake of thiamine pyrophosphate (ThPP) into mitochondria. This is Mitochondrial thiamine pyrophosphate carrier 1 (TPC1) from Saccharomyces cerevisiae (strain YJM789) (Baker's yeast).